The chain runs to 63 residues: MSGSRLFFGVSTIVSIIFAILLPMAHAQSAAPAPAPTSDGTTIDQGIAYVLMLVALVLTYLIH.

The first 27 residues, 1–27 (MSGSRLFFGVSTIVSIIFAILLPMAHA), serve as a signal peptide directing secretion. Gln28 is modified (pyrrolidone carboxylic acid). 4-hydroxyproline occurs at positions 32, 34, and 36. Residues Pro32, Pro34, and Pro36 are each glycosylated (O-linked (Ara...) hydroxyproline). Ser38 carries the GPI-anchor amidated serine lipid modification. Positions 39-63 (DGTTIDQGIAYVLMLVALVLTYLIH) are cleaved as a propeptide — removed in mature form.

It belongs to the AG-peptide AGP family. In terms of processing, contains 4-hydroxyproline; hydroxylated on Pro-32, Pro-34 and Pro-36. Post-translationally, O-glycosylated on hydroxyprolines; noncontiguous hydroxylproline residues are glycosylated with arabinogalactan.

The protein resides in the cell membrane. Functionally, proteoglycan that seems to be implicated in diverse developmental roles such as differentiation, cell-cell recognition, embryogenesis and programmed cell death. The polypeptide is Arabinogalactan protein 41 (Arabidopsis thaliana (Mouse-ear cress)).